The chain runs to 357 residues: Membrane-bound lytic murein transglycosylase C (357 aa).

The signal sequence occupies residues 1–15; it reads MKKYLLLALLPFLYA. Cysteine 16 is lipidated: N-palmitoyl cysteine. Cysteine 16 carries the S-diacylglycerol cysteine lipid modification.

It belongs to the transglycosylase Slt family.

It localises to the cell outer membrane. The enzyme catalyses Exolytic cleavage of the (1-&gt;4)-beta-glycosidic linkage between N-acetylmuramic acid (MurNAc) and N-acetylglucosamine (GlcNAc) residues in peptidoglycan, from either the reducing or the non-reducing ends of the peptidoglycan chains, with concomitant formation of a 1,6-anhydrobond in the MurNAc residue.. In terms of biological role, murein-degrading enzyme. May play a role in recycling of muropeptides during cell elongation and/or cell division. This Haemophilus influenzae (strain 86-028NP) protein is Membrane-bound lytic murein transglycosylase C.